A 410-amino-acid polypeptide reads, in one-letter code: 45 kDa immediate-early protein 2 (410 aa).

The interval 36-166 (SEEEQGEEVE…SKRISELDNE (131 aa)) is disordered. Composition is skewed to low complexity over residues 47–67 (RGAT…TSPT), 90–101 (SSSSSSCSSASD), and 132–147 (AASS…SSGG). A zinc finger lies at 257–283 (VRCRLGTMCNLALSTPFLMEHTMPVTH).

In terms of biological role, activates the E1.7 promoter. This activation is augmented by the IE1 protein. It down-regulates the transcription of genes under the control of the major IE promoter. This Homo sapiens (Human) protein is 45 kDa immediate-early protein 2 (UL122).